Here is a 155-residue protein sequence, read N- to C-terminus: Transcription antitermination protein NusB (155 aa).

This sequence belongs to the NusB family.

Involved in transcription antitermination. Required for transcription of ribosomal RNA (rRNA) genes. Binds specifically to the boxA antiterminator sequence of the ribosomal RNA (rrn) operons. The chain is Transcription antitermination protein NusB from Aliivibrio fischeri (strain ATCC 700601 / ES114) (Vibrio fischeri).